Here is a 555-residue protein sequence, read N- to C-terminus: MESTPFSGVANQIHTLCERPTYGEVKDGALDVKRQHKCPGPTSGPSPGTNLSGCIRMNDDPSMEENGVERVCPESLLQSREYSSLPLPRHTSSTDGTITSSDPGLEILNMASCDLDRNSLCKKEEDTRSASPTIEAQGTSPAHDNIAFQDSTSKDKTILNLEAKEEPETIEEHKKEHASGDSVVSPLPVTTVKSVNLRQSENTSANEKEVEAEFLRLSLGFKCDWFTLEKRVKLEERSRDLAEENLKKEITNCLKLLESLTPLCEDDNQAQEIIKKLEKSIKFLSQCAARVASRAEMLGAINQESRVSKAVEVMIQHVENLKRMYAKEHAELEELKQVLLQNERSFNPLEDDDDCQIKKRSASLNSKPSSLRRVTIASLPRNIGNAGMVAGMENNDRFSRRSSSWRILGSKQSEHRPSLPRFISTYSWADAEEEKCELKTKDDSEPSGEETVERTRKPSLSEKKNNPSKWDVSSVYDTIASWATNLKSSIRKANKALWLSIAFIVLFAALMSFLTGQLFQKSVDAAPTQQEDSWTSLEHILWPFTRLRHNGPPPV.

Topologically, residues 1 to 495 are cytoplasmic; that stretch reads MESTPFSGVA…LKSSIRKANK (495 aa). Disordered regions lie at residues 84-103 and 128-147; these read SLPLPRHTSSTDGTITSSDP and RSASPTIEAQGTSPAHDNIA. A Phosphothreonine modification is found at Thr91. Low complexity predominate over residues 91-102; sequence TSSTDGTITSSD. A compositionally biased stretch (polar residues) spans 129 to 142; it reads SASPTIEAQGTSPA. The stretch at 227–341 forms a coiled coil; the sequence is TLEKRVKLEE…LEELKQVLLQ (115 aa). Phosphoserine is present on residues Ser363, Ser370, and Ser424. The disordered stretch occupies residues 437–469; the sequence is ELKTKDDSEPSGEETVERTRKPSLSEKKNNPSK. A compositionally biased stretch (basic and acidic residues) spans 451–465; that stretch reads TVERTRKPSLSEKKN. The chain crosses the membrane as a helical; Anchor for type IV membrane protein span at residues 496 to 516; sequence ALWLSIAFIVLFAALMSFLTG. The Lumenal segment spans residues 517–555; that stretch reads QLFQKSVDAAPTQQEDSWTSLEHILWPFTRLRHNGPPPV.

This sequence belongs to the IRAG2 family. In terms of assembly, interacts (via coiled-coil domain) with ITPR3. Interacts with SUN1 and SUN2. Interacts with microtubules. Interacts with HCN4; regulates HCN4 channel activity. The removal of the C-terminal lumenal domain occurs by proteolytic processing. Expressed at high levels in pre B-cells, mature B-cells and pre T-cells. Expressed at low levels in mature T-cells and plasma B-cells. Expressed in germinal center B-cells, splenic marginal zone cells and B-cell lymphomas. Expressed in neuronal cells in the cerebral cortex, epithelial cells in tonsil, adrenal glands, zymogen-producing cells in the stomach and epithelial cells in seminal vesicles.

The protein resides in the cytoplasm. It is found in the endoplasmic reticulum membrane. The protein localises to the nucleus envelope. It localises to the cytoskeleton. Its subcellular location is the microtubule organizing center. The protein resides in the centrosome. It is found in the spindle pole. The protein localises to the chromosome. In terms of biological role, plays a role in the delivery of peptides to major histocompatibility complex (MHC) class I molecules; this occurs in a transporter associated with antigen processing (TAP)-independent manner. May play a role in taste signal transduction via ITPR3. May play a role during fertilization in pronucleus congression and fusion. Plays a role in maintaining nuclear shape, maybe as a component of the LINC complex and through interaction with microtubules. Plays a role in the regulation of cellular excitability by regulating the hyperpolarization-activated cyclic nucleotide-gated HCN4 channel activity. This Homo sapiens (Human) protein is Inositol 1,4,5-triphosphate receptor associated 2.